We begin with the raw amino-acid sequence, 389 residues long: 8-amino-7-oxononanoate synthase (389 aa).

Substrate is bound at residue Arg31. 109–110 (GY) provides a ligand contact to pyridoxal 5'-phosphate. A substrate-binding site is contributed by His134. Pyridoxal 5'-phosphate-binding positions include Ser180, 205–208 (DEAH), and 236–239 (TLSK). The residue at position 239 (Lys239) is an N6-(pyridoxal phosphate)lysine. Residue Thr349 coordinates substrate.

Belongs to the class-II pyridoxal-phosphate-dependent aminotransferase family. BioF subfamily. As to quaternary structure, homodimer. Requires pyridoxal 5'-phosphate as cofactor.

The catalysed reaction is 6-carboxyhexanoyl-[ACP] + L-alanine + H(+) = (8S)-8-amino-7-oxononanoate + holo-[ACP] + CO2. Its pathway is cofactor biosynthesis; biotin biosynthesis. In terms of biological role, catalyzes the decarboxylative condensation of pimeloyl-[acyl-carrier protein] and L-alanine to produce 8-amino-7-oxononanoate (AON), [acyl-carrier protein], and carbon dioxide. This Mycobacterium marinum (strain ATCC BAA-535 / M) protein is 8-amino-7-oxononanoate synthase.